Here is a 499-residue protein sequence, read N- to C-terminus: Isoflavone 2'-hydroxylase (499 aa).

Heme is bound at residue C436.

This sequence belongs to the cytochrome P450 family. It depends on heme as a cofactor.

The protein resides in the membrane. The catalysed reaction is a 2'-unsubstituted isoflavone + reduced [NADPH--hemoprotein reductase] + O2 = a 2'-hydroxyisoflavone + oxidized [NADPH--hemoprotein reductase] + H2O + H(+). Functionally, catalyzes the hydroxylation of isoflavones, daidzein and formononetin, to yield 2'-hydroxyisoflavones, 2'-hydroxydaidzein, and 2'-hydroxyformononetin, respectively. The chain is Isoflavone 2'-hydroxylase (CYP81E1) from Glycyrrhiza echinata (Licorice).